A 291-amino-acid polypeptide reads, in one-letter code: 4-hydroxy-tetrahydrodipicolinate synthase (291 aa).

A pyruvate-binding site is contributed by T45. Y133 (proton donor/acceptor) is an active-site residue. The active-site Schiff-base intermediate with substrate is the K161. A pyruvate-binding site is contributed by I203.

Belongs to the DapA family. In terms of assembly, homotetramer; dimer of dimers.

It is found in the cytoplasm. The catalysed reaction is L-aspartate 4-semialdehyde + pyruvate = (2S,4S)-4-hydroxy-2,3,4,5-tetrahydrodipicolinate + H2O + H(+). It functions in the pathway amino-acid biosynthesis; L-lysine biosynthesis via DAP pathway; (S)-tetrahydrodipicolinate from L-aspartate: step 3/4. Functionally, catalyzes the condensation of (S)-aspartate-beta-semialdehyde [(S)-ASA] and pyruvate to 4-hydroxy-tetrahydrodipicolinate (HTPA). This Saccharophagus degradans (strain 2-40 / ATCC 43961 / DSM 17024) protein is 4-hydroxy-tetrahydrodipicolinate synthase.